Consider the following 120-residue polypeptide: Crustacean hyperglycemic hormones 2 (120 aa).

The first 27 residues, 1–27 (MIAFHMVWSALLASLLLLLLAPSASPV), serve as a signal peptide directing secretion. 3 cysteine pairs are disulfide-bonded: Cys-53–Cys-89, Cys-69–Cys-85, and Cys-72–Cys-98. Valine amide is present on Val-118.

It belongs to the arthropod CHH/MIH/GIH/VIH hormone family.

The protein localises to the secreted. Its function is as follows. Hormone found in the sinus gland of isopods and decapods which controls the blood sugar level. Has a secretagogue action over the amylase released from the midgut gland. May act as a stress hormone and may be involved in the control of molting and reproduction. The polypeptide is Crustacean hyperglycemic hormones 2 (Penaeus japonicus (Kuruma prawn)).